We begin with the raw amino-acid sequence, 174 residues long: Ribosomal RNA large subunit methyltransferase H (174 aa).

Residues L90, G122, and 141–146 (LGELTW) contribute to the S-adenosyl-L-methionine site.

It belongs to the RNA methyltransferase RlmH family. In terms of assembly, homodimer.

Its subcellular location is the cytoplasm. It catalyses the reaction pseudouridine(1915) in 23S rRNA + S-adenosyl-L-methionine = N(3)-methylpseudouridine(1915) in 23S rRNA + S-adenosyl-L-homocysteine + H(+). In terms of biological role, specifically methylates the pseudouridine at position 1915 (m3Psi1915) in 23S rRNA. This chain is Ribosomal RNA large subunit methyltransferase H, found in Brucella melitensis biotype 2 (strain ATCC 23457).